The chain runs to 1988 residues: Protein Ycf2 (1988 aa).

Glycine 1337–serine 1344 contributes to the ATP binding site. Positions serine 1377–isoleucine 1396 are disordered.

The protein belongs to the Ycf2 family.

It is found in the plastid. It localises to the chloroplast stroma. In terms of biological role, probable ATPase of unknown function. Its presence in a non-photosynthetic plant (Epifagus virginiana) and experiments in tobacco indicate that it has an essential function which is probably not related to photosynthesis. The chain is Protein Ycf2 from Cucumis sativus (Cucumber).